The sequence spans 456 residues: Shufflon protein D' (456 aa).

The constant region stretch occupies residues 1 to 361; it reads MKKYDRGWAS…TGAILSCQSG (361 aa). A variable region region spans residues 362-456; that stretch reads TWRKSNSGST…KCSYVVACQN (95 aa).

The polypeptide is Shufflon protein D' (Escherichia coli).